Consider the following 230-residue polypeptide: A-type ATP synthase subunit D (230 aa).

Positions 204-230 (AKKEEEEDALAAEEEAEEEPEAVTADD) are disordered. Positions 208 to 230 (EEEDALAAEEEAEEEPEAVTADD) are enriched in acidic residues.

The protein belongs to the V-ATPase D subunit family. In terms of assembly, has multiple subunits with at least A(3), B(3), C, D, E, F, H, I and proteolipid K(x).

It localises to the cell membrane. Component of the A-type ATP synthase that produces ATP from ADP in the presence of a proton gradient across the membrane. The polypeptide is A-type ATP synthase subunit D (Haloarcula marismortui (strain ATCC 43049 / DSM 3752 / JCM 8966 / VKM B-1809) (Halobacterium marismortui)).